A 115-amino-acid polypeptide reads, in one-letter code: MPVTQEEIIAGIAEIIEEVTGIEPSEITPEKSFVDDLDIDSLSMVEIAVQTEDKYGVKIPDEDLAGLRTVGDVVAYIQKLEEENPEAAQALRAKIESENPDAVANVQARLEAESK.

The 79-residue stretch at 3–81 folds into the Carrier domain; the sequence is VTQEEIIAGI…DVVAYIQKLE (79 aa). Position 41 is an O-(pantetheine 4'-phosphoryl)serine (serine 41).

The protein belongs to the acyl carrier protein (ACP) family. 4'-phosphopantetheine is transferred from CoA to a specific serine of apo-AcpM.

It localises to the cytoplasm. Its function is as follows. Acyl carrier protein involved in meromycolate extension. The chain is Meromycolate extension acyl carrier protein (acpM) from Mycobacterium bovis (strain ATCC BAA-935 / AF2122/97).